We begin with the raw amino-acid sequence, 147 residues long: Allograft inflammatory factor 1 (147 aa).

An N-acetylserine modification is found at Ser2. Lys11 carries the post-translational modification N6-acetyllysine. Ser39 carries the phosphoserine modification. The EF-hand 1 domain occupies 45-80; the sequence is SKLEGFKEKYMEFDLNGNGDIDIMSLKRMLEKLGVP. Ca(2+) contacts are provided by Asp58, Asn60, Asn62, Asp64, Thr100, and Asp105. In terms of domain architecture, EF-hand 2; degenerate spans 81–115; the sequence is KTHLELKKLIGEVSSGSGETFSYPDFLRMMLGKRS. The tract at residues 128–147 is disordered; that stretch reads AREKEKPTGPPAKKAISELP.

As to quaternary structure, homodimer (Potential). Monomer. Interacts with LCP1. In terms of processing, phosphorylated on serine residues. Detected in T-lymphocytes and peripheral blood mononuclear cells.

Its subcellular location is the cytoplasm. It localises to the cytoskeleton. It is found in the cell projection. The protein resides in the ruffle membrane. The protein localises to the phagocytic cup. Its function is as follows. Actin-binding protein that enhances membrane ruffling and RAC activation. Enhances the actin-bundling activity of LCP1. Binds calcium. Plays a role in RAC signaling and in phagocytosis. May play a role in macrophage activation and function. Promotes the proliferation of vascular smooth muscle cells and of T-lymphocytes. Enhances lymphocyte migration. Plays a role in vascular inflammation. The polypeptide is Allograft inflammatory factor 1 (AIF1) (Homo sapiens (Human)).